Consider the following 221-residue polypeptide: Orotate phosphoribosyltransferase (221 aa).

Residue Lys-26 participates in 5-phospho-alpha-D-ribose 1-diphosphate binding. 34–35 contacts orotate; the sequence is FF. Residues 72 to 73, Arg-98, Lys-99, Lys-102, His-104, and 123 to 131 each bind 5-phospho-alpha-D-ribose 1-diphosphate; these read YK and DDVISAGTS. Residues Ser-127 and Arg-155 each coordinate orotate.

Belongs to the purine/pyrimidine phosphoribosyltransferase family. PyrE subfamily. Homodimer. Mg(2+) is required as a cofactor.

The catalysed reaction is orotidine 5'-phosphate + diphosphate = orotate + 5-phospho-alpha-D-ribose 1-diphosphate. It participates in pyrimidine metabolism; UMP biosynthesis via de novo pathway; UMP from orotate: step 1/2. In terms of biological role, catalyzes the transfer of a ribosyl phosphate group from 5-phosphoribose 1-diphosphate to orotate, leading to the formation of orotidine monophosphate (OMP). This is Orotate phosphoribosyltransferase from Janthinobacterium sp. (strain Marseille) (Minibacterium massiliensis).